Reading from the N-terminus, the 931-residue chain is Up-regulator of cell proliferation (931 aa).

S3 carries the post-translational modification Phosphoserine. Residues R689–R929 form the VLIG-type G domain.

Belongs to the TRAFAC class dynamin-like GTPase superfamily. Very large inducible GTPase (VLIG) family. As to expression, strongly expressed in hepatitis B virus-infected liver and in HCC cells. Also highly expressed in well-differentiated gastric cancer tissues and various gastric cancer cell lines.

Its subcellular location is the cytoplasm. It is found in the nucleus. Functionally, may be involved in cell cycle progression through the regulation of cyclin D1 expression. May participate in the development of hepatocellular carcinoma (HCC) by promoting hepatocellular growth and survival. May play an important role in development of gastric cancer. This chain is Up-regulator of cell proliferation (URGCP), found in Homo sapiens (Human).